The chain runs to 247 residues: Coproheme decarboxylase (247 aa).

Residues Arg129, 143 to 147 (YPMDK), His170, Gln183, and Ser221 contribute to the Fe-coproporphyrin III site. Residue Tyr143 is part of the active site.

Belongs to the ChdC family. Type 1 subfamily. It depends on Fe-coproporphyrin III as a cofactor.

The catalysed reaction is Fe-coproporphyrin III + 2 H2O2 + 2 H(+) = heme b + 2 CO2 + 4 H2O. It carries out the reaction Fe-coproporphyrin III + H2O2 + H(+) = harderoheme III + CO2 + 2 H2O. The enzyme catalyses harderoheme III + H2O2 + H(+) = heme b + CO2 + 2 H2O. It functions in the pathway porphyrin-containing compound metabolism; protoheme biosynthesis. In terms of biological role, involved in coproporphyrin-dependent heme b biosynthesis. Catalyzes the decarboxylation of Fe-coproporphyrin III (coproheme) to heme b (protoheme IX), the last step of the pathway. The reaction occurs in a stepwise manner with a three-propionate intermediate. In Bacillus anthracis, this protein is Coproheme decarboxylase.